Here is a 549-residue protein sequence, read N- to C-terminus: Probable protein kinase UbiB (549 aa).

One can recognise a Protein kinase domain in the interval 123–501 (DFDDVPLASA…QHKAHKSNYL (379 aa)). ATP is bound by residues 129 to 137 (LASASIAQV) and Lys-152. The active-site Proton acceptor is Asp-287. Transmembrane regions (helical) follow at residues 498 to 517 (SNYLLITSAVFVICGTILFT) and 521 to 540 (TLWASLLCLGTGAGLWLLGW).

This sequence belongs to the ABC1 family. UbiB subfamily.

It localises to the cell inner membrane. The protein operates within cofactor biosynthesis; ubiquinone biosynthesis [regulation]. In terms of biological role, is probably a protein kinase regulator of UbiI activity which is involved in aerobic coenzyme Q (ubiquinone) biosynthesis. The protein is Probable protein kinase UbiB of Shewanella denitrificans (strain OS217 / ATCC BAA-1090 / DSM 15013).